The chain runs to 957 residues: Glycine dehydrogenase (decarboxylating) (957 aa).

An N6-(pyridoxal phosphate)lysine modification is found at Lys708.

Belongs to the GcvP family. As to quaternary structure, the glycine cleavage system is composed of four proteins: P, T, L and H. Pyridoxal 5'-phosphate serves as cofactor.

The catalysed reaction is N(6)-[(R)-lipoyl]-L-lysyl-[glycine-cleavage complex H protein] + glycine + H(+) = N(6)-[(R)-S(8)-aminomethyldihydrolipoyl]-L-lysyl-[glycine-cleavage complex H protein] + CO2. In terms of biological role, the glycine cleavage system catalyzes the degradation of glycine. The P protein binds the alpha-amino group of glycine through its pyridoxal phosphate cofactor; CO(2) is released and the remaining methylamine moiety is then transferred to the lipoamide cofactor of the H protein. The sequence is that of Glycine dehydrogenase (decarboxylating) from Escherichia coli O1:K1 / APEC.